The following is a 246-amino-acid chain: Protein YIPF4 (246 aa).

The Cytoplasmic portion of the chain corresponds to methionine 1–proline 115. Residues aspartate 116–phenylalanine 136 traverse the membrane as a helical segment. Topologically, residues arginine 137–serine 140 are lumenal. The chain crosses the membrane as a helical span at residues tryptophan 141 to glycine 161. Over glycine 162–glutamine 168 the chain is Cytoplasmic. Residues valine 169 to valine 189 traverse the membrane as a helical segment. Residues valine 190–serine 197 lie on the Lumenal side of the membrane. Residues threonine 198–glycine 218 traverse the membrane as a helical segment. Topologically, residues glutamate 219–lysine 225 are cytoplasmic. Residues proline 226–valine 246 form a helical membrane-spanning segment.

This sequence belongs to the YIP1 family. In terms of assembly, interacts with YIPF3 and YIPF5.

Its subcellular location is the golgi apparatus. It is found in the cis-Golgi network membrane. Functionally, involved in the maintenance of the Golgi structure. The chain is Protein YIPF4 (Yipf4) from Mus musculus (Mouse).